Consider the following 317-residue polypeptide: MSAQQTNLGIVVGVDGSPCSHTAVEWAARDAQMRNVALRVVQVVPPVITAPEGWAFEYSRFQEAQKREIVEHSYLVAQAHQIVEQAHKVALEASSSGRAAQITGEVLHGQIVPTLANISRQVAMVVLGYRGQGAVAGALLGSVSSSLVRHAHGPVAVIPEEPRPARPPHAPVVVGIDGSPTSGLAAEIAFDEASRRGVDLVALHAWSDMGPLDFPRLNWAPIEWRNLEDEQEKMLARRLSGWQDRYPDVVVHKVVVCDRPAPRLLELAQTAQLVVVGSHGRGGFPGMHLGSVSRAVVNSGQAPVIVARIPQDPAVPA.

ATP is bound by residues G13, 128 to 134 (GYRGQGA), 142 to 143 (SV), G175, D208, 277 to 283 (GSHGRGG), and 291 to 293 (SVS).

It belongs to the universal stress protein A family.

In Mycobacterium bovis (strain ATCC BAA-935 / AF2122/97), this protein is Universal stress protein Mb2019.